We begin with the raw amino-acid sequence, 335 residues long: Acetyl-coenzyme A carboxylase carboxyl transferase subunit alpha (335 aa).

In terms of domain architecture, CoA carboxyltransferase C-terminal spans 40-294 (QLETLATRRR…KEAIEKHLDT (255 aa)).

Belongs to the AccA family. Acetyl-CoA carboxylase is a heterohexamer composed of biotin carboxyl carrier protein (AccB), biotin carboxylase (AccC) and two subunits each of ACCase subunit alpha (AccA) and ACCase subunit beta (AccD).

The protein resides in the cytoplasm. It carries out the reaction N(6)-carboxybiotinyl-L-lysyl-[protein] + acetyl-CoA = N(6)-biotinyl-L-lysyl-[protein] + malonyl-CoA. Its pathway is lipid metabolism; malonyl-CoA biosynthesis; malonyl-CoA from acetyl-CoA: step 1/1. Functionally, component of the acetyl coenzyme A carboxylase (ACC) complex. First, biotin carboxylase catalyzes the carboxylation of biotin on its carrier protein (BCCP) and then the CO(2) group is transferred by the carboxyltransferase to acetyl-CoA to form malonyl-CoA. This chain is Acetyl-coenzyme A carboxylase carboxyl transferase subunit alpha, found in Prochlorococcus marinus (strain MIT 9312).